A 206-amino-acid polypeptide reads, in one-letter code: Small ribosomal subunit protein uS4 (206 aa).

The S4 RNA-binding domain maps to 96 to 156 (CRLDNVVYRM…EKSSNQLRIV (61 aa)).

It belongs to the universal ribosomal protein uS4 family. In terms of assembly, part of the 30S ribosomal subunit. Contacts protein S5. The interaction surface between S4 and S5 is involved in control of translational fidelity.

In terms of biological role, one of the primary rRNA binding proteins, it binds directly to 16S rRNA where it nucleates assembly of the body of the 30S subunit. Its function is as follows. With S5 and S12 plays an important role in translational accuracy. The polypeptide is Small ribosomal subunit protein uS4 (Pseudomonas putida (strain W619)).